The following is a 39-amino-acid chain: Protein disulfide-isomerase A3 (39 aa).

The protein belongs to the protein disulfide isomerase family. As to quaternary structure, part of the major histocompatibility complex class I (MHC I) peptide loading complex composed of TAP1, TAP2, B2M, MHC heavy chain, TAPBP, PDIA3, and CALR. Interacts with ERP27 and CANX. Interacts with SERPINA2 and with SERPINA1. Interacts with ATP2A2. Within the major histocompatibility complex class I (MHC I) peptide loading complex forms reversible disulfide-linked heterodimers with TAPBP as part of its protein folding chaperone activity. This is essential to assist the dynamic assembly of the MHC I complex with high affinity antigens in the endoplasmic reticulum. Post-translationally, phosphorylated. Predominantly expressed in liver. Low in brain, testis and colon. Not detectable in pancreas and skeletal muscle.

It is found in the endoplasmic reticulum. It localises to the endoplasmic reticulum lumen. The protein localises to the melanosome. The catalysed reaction is Catalyzes the rearrangement of -S-S- bonds in proteins.. In terms of biological role, protein disulfide isomerase that catalyzes the formation, isomerization, and reduction or oxidation of disulfide bonds in client proteins and functions as a protein folding chaperone. Core component of the major histocompatibility complex class I (MHC I) peptide loading complex where it functions as an essential folding chaperone for TAPBP. Through TAPBP, assists the dynamic assembly of the MHC I complex with high affinity antigens in the endoplasmic reticulum. Therefore, plays a crucial role in the presentation of antigens to cytotoxic T cells in adaptive immunity. This Papio hamadryas (Hamadryas baboon) protein is Protein disulfide-isomerase A3 (PDIA3).